We begin with the raw amino-acid sequence, 210 residues long: Thiamine-phosphate synthase (210 aa).

4-amino-2-methyl-5-(diphosphooxymethyl)pyrimidine contacts are provided by residues 36-40 (QLREK) and Asn-68. Residues Asp-69 and Asp-88 each contribute to the Mg(2+) site. Ser-107 lines the 4-amino-2-methyl-5-(diphosphooxymethyl)pyrimidine pocket. Residue 133–135 (TGS) participates in 2-[(2R,5Z)-2-carboxy-4-methylthiazol-5(2H)-ylidene]ethyl phosphate binding. Lys-136 serves as a coordination point for 4-amino-2-methyl-5-(diphosphooxymethyl)pyrimidine. 2-[(2R,5Z)-2-carboxy-4-methylthiazol-5(2H)-ylidene]ethyl phosphate contacts are provided by residues Gly-164 and 184–185 (IS).

This sequence belongs to the thiamine-phosphate synthase family. The cofactor is Mg(2+).

The catalysed reaction is 2-[(2R,5Z)-2-carboxy-4-methylthiazol-5(2H)-ylidene]ethyl phosphate + 4-amino-2-methyl-5-(diphosphooxymethyl)pyrimidine + 2 H(+) = thiamine phosphate + CO2 + diphosphate. The enzyme catalyses 2-(2-carboxy-4-methylthiazol-5-yl)ethyl phosphate + 4-amino-2-methyl-5-(diphosphooxymethyl)pyrimidine + 2 H(+) = thiamine phosphate + CO2 + diphosphate. It carries out the reaction 4-methyl-5-(2-phosphooxyethyl)-thiazole + 4-amino-2-methyl-5-(diphosphooxymethyl)pyrimidine + H(+) = thiamine phosphate + diphosphate. Its pathway is cofactor biosynthesis; thiamine diphosphate biosynthesis; thiamine phosphate from 4-amino-2-methyl-5-diphosphomethylpyrimidine and 4-methyl-5-(2-phosphoethyl)-thiazole: step 1/1. Functionally, condenses 4-methyl-5-(beta-hydroxyethyl)thiazole monophosphate (THZ-P) and 2-methyl-4-amino-5-hydroxymethyl pyrimidine pyrophosphate (HMP-PP) to form thiamine monophosphate (TMP). The chain is Thiamine-phosphate synthase from Moorella thermoacetica (strain ATCC 39073 / JCM 9320).